We begin with the raw amino-acid sequence, 1065 residues long: Outer capsid protein VP3 (1065 aa).

It localises to the virion. The enzyme catalyses a 5'-end diphospho-ribonucleoside in mRNA + GTP + H(+) = a 5'-end (5'-triphosphoguanosine)-ribonucleoside in mRNA + diphosphate. The catalysed reaction is a 5'-end (5'-triphosphoguanosine)-ribonucleoside in mRNA + S-adenosyl-L-methionine = a 5'-end (N(7)-methyl 5'-triphosphoguanosine)-ribonucleoside in mRNA + S-adenosyl-L-homocysteine. Its function is as follows. Outer capsid protein involved in mRNA capping. Catalyzes the last 3 enzymatic activities for formation of the 5' cap structure on the viral plus-strand transcripts, namely the RNA guanylyltransferase, RNA-7N- and RNA-2'O-methyltransferase activities. This is Outer capsid protein VP3 (S3) from Cryphonectria parasitica mycoreovirus 1 (strain 9B21) (CpMYRV-1).